A 401-amino-acid chain; its full sequence is CinA-like protein (401 aa).

The protein belongs to the CinA family.

The protein is CinA-like protein of Thermosipho melanesiensis (strain DSM 12029 / CIP 104789 / BI429).